Here is a 339-residue protein sequence, read N- to C-terminus: MYSLHDFKFPEDWIEPPANDKCIYTCYKEVVDFKLFEENKKTLEYYYGTISSTIYLYPLCNYEQLLVASRYLTVCFVVDDFLESKLTNPDDSRELIKKLEHIFMDGNFYDSNNISNIEKYVLYFRETTKQFVGEKIEFFNQFLKFIIDWINSINPFNRADNLNNYDSYNFFKRTNSGTYVSLSVAMLLYPNSKIDPKIWINPRFDRFATNGGYQMATMNDCASYAKEIRNNNHLTNPLHFLQNQVGSFDNVYKVILKFNDEIMNQICEDERILLLECPIEQRDDLKLLTRSMKLILGGNYLWSLQCSRYVDINSPFIEQRSNDPNVIAYEKIVDKILLK.

Positions 79 to 84 match the DDxx(x)D/E motif motif; it reads DDFLES. The NDxxSxxxD/E motif signature appears at 219–227; sequence NDCASYAKE.

This sequence belongs to the terpene synthase family.

It catalyses the reaction (2E,6E)-farnesyl diphosphate = (-)-beta-barbatene + diphosphate. It carries out the reaction (2E,6E)-farnesyl diphosphate = (E)-beta-farnesene + diphosphate. The enzyme catalyses (2E)-geranyl diphosphate = (Z)-beta-ocimene + diphosphate. The catalysed reaction is (2E)-geranyl diphosphate + H2O = linalool + diphosphate. It catalyses the reaction (2E)-geranyl diphosphate = beta-myrcene + diphosphate. Terpene synthase that converts its substrate farnesyl diphosphate (FPP) into the sesquiterpene beta-barbatene as a major product as well as (E)-beta-farnesene as a minor product. Is also able to convert geranyl diphosphate (GPP) into a mixture of monoterpenes including (Z)-beta-ocimene, linalool, beta-myrcene, limonene and alpha-terpineol. The sequence is that of Terpene synthase 9 from Dictyostelium discoideum (Social amoeba).